The sequence spans 299 residues: F-actin-capping protein subunit alpha-3 (299 aa).

At S290 the chain carries Phosphoserine.

This sequence belongs to the F-actin-capping protein alpha subunit family. In terms of assembly, component of the F-actin capping complex, composed of a heterodimer of an alpha and a beta subunit. Component of the WASH complex, composed of F-actin-capping protein subunit alpha (CAPZA1, CAPZA2 or CAPZA3), F-actin-capping protein subunit beta (CAPZB), WASH (WASHC1, WASH2P, WASH3P, WASH4P, WASH5P or WASH6P), WASHC2 (WASHC2A or WASHC2C), WASHC3, WASHC4 and WASHC5. Expressed exclusively in testis and sperm. Highest expression is found in the neck region of ejaculated sperm with lower levels found in the tail and postacrosome region.

Its subcellular location is the cytoplasm. It localises to the cytoskeleton. Functionally, F-actin-capping proteins bind in a Ca(2+)-independent manner to the fast growing ends of actin filaments (barbed end) thereby blocking the exchange of subunits at these ends. Unlike other capping proteins (such as gelsolin and severin), these proteins do not sever actin filaments. May play a role in the morphogenesis of spermatid. In Homo sapiens (Human), this protein is F-actin-capping protein subunit alpha-3 (CAPZA3).